The following is a 105-amino-acid chain: UPF0235 protein RT0827 (105 aa).

This sequence belongs to the UPF0235 family.

This Rickettsia typhi (strain ATCC VR-144 / Wilmington) protein is UPF0235 protein RT0827.